The chain runs to 260 residues: Acetylglutamate kinase (260 aa).

Residues G46 to G47, R68, and N160 each bind substrate.

The protein belongs to the acetylglutamate kinase family. ArgB subfamily.

It is found in the cytoplasm. The catalysed reaction is N-acetyl-L-glutamate + ATP = N-acetyl-L-glutamyl 5-phosphate + ADP. Its pathway is amino-acid biosynthesis; L-arginine biosynthesis; N(2)-acetyl-L-ornithine from L-glutamate: step 2/4. In terms of biological role, catalyzes the ATP-dependent phosphorylation of N-acetyl-L-glutamate. This Shewanella sp. (strain MR-7) protein is Acetylglutamate kinase.